We begin with the raw amino-acid sequence, 1582 residues long: Sca1 complex scaffold protein scaA (1582 aa).

2 stretches are compositionally biased toward low complexity: residues 1 to 14 (MSSL…TPST) and 109 to 131 (LSPS…TTST). Disordered regions lie at residues 1-22 (MSSL…TFSK) and 108-147 (GLSP…QIKK). The TPR 1 repeat unit spans residues 4 to 37 (LDPSLSTTPSTNRRGTFSKAKSFRRAALNLEPQG). The TPR 2 repeat unit spans residues 166–199 (IYTSFPESMAFDDYMDYEESLVEWKRQVEQNLGI). A disordered region spans residues 246-349 (IKETNSSVND…PSTGSLAGFV (104 aa)). 3 stretches are compositionally biased toward polar residues: residues 249-267 (TNSS…PTLR), 288-310 (NKDN…NSGI), and 318-332 (SDTS…QLDG). The residue at position 359 (Ser-359) is a Phosphoserine; by PKB. The interval 400–600 (RSGSGFGMDH…QRQTSTWFRG (201 aa)) is gefA and gefH binding. 2 disordered regions span residues 468-493 (PKNS…GVGG) and 686-734 (SLSS…DKDK). Composition is skewed to gly residues over residues 478–493 (GSGG…GVGG) and 694–714 (QQQG…GSGS). The span at 715–726 (GLNMSGTSGSSG) shows a compositional bias: low complexity. The stretch at 742 to 777 (MHSINNTTNVGTKEDRRQYTKILQTYEQRLQFSFRL) is one TPR 3 repeat. Gly residues predominate over residues 864–875 (GGGSGGASGGGI). Residues 864 to 978 (GGGSGGASGG…GSISTHPNTP (115 aa)) are disordered. Low complexity predominate over residues 903–928 (HIPSGSSLLSSPPNRQGSTGSFSFIG). Over residues 940-953 (NSSSLESPRTQSQL) the composition is skewed to polar residues. A compositionally biased stretch (low complexity) spans 960–972 (GSSPRSHSGGSIS). Residues 1000-1400 (FLDLTNEKLA…SIKKEGNLYN (401 aa)) are pppA and pho2B binding. Residues 1080–1113 (TQEVVRLVFVYYYLGIIQERLNFFSNNVGILGFV) form a TPR 4 repeat.

As to quaternary structure, component of the Sca1 complex composed of at least gefA, gefH, scaA, phr, and the protein phosphatase 2A subunits pppA and pho2B. Post-translationally, phosphorylated at Ser-359 by PKB and PKBR1 is induced by chemoattractant.

The protein resides in the cell membrane. Its function is as follows. Component of the Sca1 complex, a regulator of cell motility, chemotaxis and signal relay. The Sca1 complex is recruited to the plasma membrane in a chemoattractant- and F-actin-dependent manner and is enriched at the leading edge of chemotaxing cells where it regulates F-actin dynamics and signal relay by controlling the activation of rasC and the downstream target of rapamycin complex 2 (TORC2)-Akt/protein kinase B (PKB) pathway. ScaA acts as a molecular scaffold, bringing together gefA, gefH and phr with PP2A. The polypeptide is Sca1 complex scaffold protein scaA (Dictyostelium discoideum (Social amoeba)).